The primary structure comprises 114 residues: Ribosome-binding factor A (114 aa).

The protein belongs to the RbfA family. As to quaternary structure, monomer. Binds 30S ribosomal subunits, but not 50S ribosomal subunits or 70S ribosomes.

Its subcellular location is the cytoplasm. Its function is as follows. One of several proteins that assist in the late maturation steps of the functional core of the 30S ribosomal subunit. Associates with free 30S ribosomal subunits (but not with 30S subunits that are part of 70S ribosomes or polysomes). Required for efficient processing of 16S rRNA. May interact with the 5'-terminal helix region of 16S rRNA. This Macrococcus caseolyticus (strain JCSC5402) (Macrococcoides caseolyticum) protein is Ribosome-binding factor A.